We begin with the raw amino-acid sequence, 309 residues long: Elongation factor Ts (309 aa).

Residues Thr-82 to Val-85 are involved in Mg(2+) ion dislocation from EF-Tu.

This sequence belongs to the EF-Ts family.

It localises to the cytoplasm. Associates with the EF-Tu.GDP complex and induces the exchange of GDP to GTP. It remains bound to the aminoacyl-tRNA.EF-Tu.GTP complex up to the GTP hydrolysis stage on the ribosome. This is Elongation factor Ts from Rickettsia peacockii (strain Rustic).